Consider the following 829-residue polypeptide: Venom phosphodiesterase CdcPDE (829 aa).

SMB domains lie at 8 to 51 and 52 to 96; these read PQVS…VLPT and QSWS…GETS. Cystine bridges form between Cys12-Cys16, Cys12-Cys29, Cys16-Cys47, Cys27-Cys29, Cys27-Cys40, Cys33-Cys39, Cys40-Cys47, Cys56-Cys61, Cys56-Cys73, Cys61-Cys91, Cys71-Cys73, Cys71-Cys84, Cys77-Cys83, Cys84-Cys91, Cys102-Cys148, and Cys110-Cys322. Asn17 carries N-linked (GlcNAc...) asparagine glycosylation. Positions 36–38 match the Cell attachment site motif; it reads RQA. Asp125 and Thr163 together coordinate a divalent metal cation. The active-site AMP-threonine intermediate is the Thr163. 2 N-linked (GlcNAc...) asparagine glycosylation sites follow: Asn194 and Asn237. Lys249 provides a ligand contact to AMP. The a divalent metal cation site is built by Asp283, His287, Asp330, and His331. His287 is an AMP binding site. 6 disulfides stabilise this stretch: Cys338–Cys435, Cys386–Cys771, Cys519–Cys577, Cys532–Cys632, Cys534–Cys617, and Cys740–Cys750. An N-linked (GlcNAc...) asparagine glycan is attached at Asn383. Position 440 (His440) interacts with a divalent metal cation. N-linked (GlcNAc...) asparagine glycosylation is found at Asn572 and Asn652.

This sequence belongs to the nucleotide pyrophosphatase/phosphodiesterase family. As to quaternary structure, monomer. It depends on a divalent metal cation as a cofactor. N-glycosylated. Glycosylation counts for an increased mass of ~9%. Post-translationally, contains 16 disulfide bonds. Expressed by venom gland.

It is found in the secreted. It catalyses the reaction ADP + H2O = AMP + phosphate + H(+). Hydrolyzes ADP with high activity. Shows weak or no activity on 5'-AMP, 5'-GMP, 3'-AMP, ATP, cAMP, and cGMP. Is devoid of monophosphatase and proteinase activities. Inhibits ADP-induced platelet aggregation and is cytotoxic to human keratinocytes. Kinetic parameters indicated a higher affinity for the substrate bis(p-nitrophenyl) phosphate compared to others snake venom PDEs. Is recognized by the crotalid antivenom produced by the Instituto Butantan. This Crotalus durissus collilineatus (Brazilian rattlesnake) protein is Venom phosphodiesterase CdcPDE.